The following is a 460-amino-acid chain: Elongation factor 1-alpha-A (460 aa).

Glycine 2 bears the N,N,N-trimethylglycine mark. Lysine 3 bears the N6,N6-dimethyllysine; alternate mark. The residue at position 3 (lysine 3) is an N6-methyllysine; alternate. The region spanning 5–240 (KGHINVVVIG…DSIEPPARPT (236 aa)) is the tr-type G domain. Positions 14–21 (GHVDSGKS) are G1. Residue 14–21 (GHVDSGKS) participates in GTP binding. Lysine 30 carries the N6-methyllysine modification. The segment at 70–74 (GITID) is G2. An N6,N6,N6-trimethyllysine modification is found at lysine 79. The segment at 91–94 (DAPG) is G3. Residues 91 to 95 (DAPGH) and 153 to 156 (NKMD) each bind GTP. Residues 153–156 (NKMD) are G4. The interval 192–194 (SGF) is G5. Residue lysine 316 is modified to N6,N6-dimethyllysine; alternate. The residue at position 316 (lysine 316) is an N6-methyllysine; alternate. Lysine 390 carries the N6-methyllysine modification.

It belongs to the TRAFAC class translation factor GTPase superfamily. Classic translation factor GTPase family. EF-Tu/EF-1A subfamily.

It is found in the cytoplasm. In terms of biological role, this protein promotes the GTP-dependent binding of aminoacyl-tRNA to the A-site of ribosomes during protein biosynthesis. The sequence is that of Elongation factor 1-alpha-A (tef101) from Schizosaccharomyces pombe (strain 972 / ATCC 24843) (Fission yeast).